The primary structure comprises 258 residues: F-box/SPRY domain-containing protein 1 (258 aa).

Residues 6 to 54 form the F-box domain; that stretch reads TEYAPDIPDNVLELIFSYLKLQDLRNCALVCKSWHRFLSDENNEVWRAQ. The B30.2/SPRY domain maps to 64–256; the sequence is FKTDLLSVVP…ISMVYLGPPL (193 aa).

The protein belongs to the FBXO45/Fsn family. As to quaternary structure, component of an E3 ubiquitin ligase complex composed of hiw and Fsn.

The protein resides in the synapse. The protein operates within protein modification; protein ubiquitination. Its function is as follows. Required in the presynaptic motoneuron to down-regulate the levels of wnd and restrain synaptic terminal growth at the neuromuscular junction (NMJ). In Culex quinquefasciatus (Southern house mosquito), this protein is F-box/SPRY domain-containing protein 1.